The sequence spans 441 residues: UDP-N-acetylglucosamine--peptide N-acetylglucosaminyltransferase stabilizing protein GtfB (441 aa).

The protein belongs to the GtfB family. In terms of assembly, forms a heterotetramer with 2 subunits each of GtfA and GtfB. Part of the accessory SecA2/SecY2 protein translocation apparatus.

It localises to the cell membrane. It participates in protein modification; protein glycosylation. Functionally, required for polymorphic O-glycosylation of the serine-rich repeat protein (SRRP) in this bacteria. A stabilizing protein that is part of the accessory SecA2/SecY2 system specifically required to export serine-rich repeat cell wall proteins encoded in the same operon. The GtfA-GtfB complex adds GlcNAc from UDP-GlcNAc to the substrate protein, attaching the first sugar residue. Stabilizes the glycosylation activity of GtfA. Has no N-acetylglucosaminyl transferase activity on its own. In Limosilactobacillus reuteri subsp. suis (strain ATCC 53608 / LMG 31752 / 1063) (Lactobacillus reuteri), this protein is UDP-N-acetylglucosamine--peptide N-acetylglucosaminyltransferase stabilizing protein GtfB.